We begin with the raw amino-acid sequence, 619 residues long: Dihydroxy-acid dehydratase (619 aa).

Residue aspartate 81 coordinates Mg(2+). Cysteine 122 contributes to the [2Fe-2S] cluster binding site. Mg(2+) is bound by residues aspartate 123 and lysine 124. Lysine 124 is subject to N6-carboxylysine. A [2Fe-2S] cluster-binding site is contributed by cysteine 195. Glutamate 492 provides a ligand contact to Mg(2+). Catalysis depends on serine 518, which acts as the Proton acceptor.

The protein belongs to the IlvD/Edd family. In terms of assembly, homodimer. [2Fe-2S] cluster is required as a cofactor. Requires Mg(2+) as cofactor.

It catalyses the reaction (2R)-2,3-dihydroxy-3-methylbutanoate = 3-methyl-2-oxobutanoate + H2O. The catalysed reaction is (2R,3R)-2,3-dihydroxy-3-methylpentanoate = (S)-3-methyl-2-oxopentanoate + H2O. It functions in the pathway amino-acid biosynthesis; L-isoleucine biosynthesis; L-isoleucine from 2-oxobutanoate: step 3/4. It participates in amino-acid biosynthesis; L-valine biosynthesis; L-valine from pyruvate: step 3/4. Functionally, functions in the biosynthesis of branched-chain amino acids. Catalyzes the dehydration of (2R,3R)-2,3-dihydroxy-3-methylpentanoate (2,3-dihydroxy-3-methylvalerate) into 2-oxo-3-methylpentanoate (2-oxo-3-methylvalerate) and of (2R)-2,3-dihydroxy-3-methylbutanoate (2,3-dihydroxyisovalerate) into 2-oxo-3-methylbutanoate (2-oxoisovalerate), the penultimate precursor to L-isoleucine and L-valine, respectively. In Synechococcus elongatus (strain ATCC 33912 / PCC 7942 / FACHB-805) (Anacystis nidulans R2), this protein is Dihydroxy-acid dehydratase.